A 184-amino-acid chain; its full sequence is ADP-ribosylation factor-like protein 8c (184 aa).

Positions 1 to 18 form an intramembrane region, note=Mediates targeting to membranes; the sequence is MGLWDSLLNWLRSLFFKQ. Residues 29–34, 48–51, 70–74, and 129–132 each bind GTP; these read NAGKTS, MIPT, DLGGQ, and NKID.

This sequence belongs to the small GTPase superfamily. Arf family. As to quaternary structure, interacts with tubulin.

It is found in the late endosome membrane. Its subcellular location is the lysosome membrane. It localises to the cytoplasm. The protein resides in the cytoskeleton. The protein localises to the spindle. Functionally, may play a role in lysosome motility. May play a role in chromosome segregation. In terms of biological role, (Microbial infection) Component of tomato mosaic virus (ToMV) RNA replication complexes. Required for tobamovirus multiplication, especially for efficient negative-strand RNA synthesis and viral RNA capping. This Arabidopsis thaliana (Mouse-ear cress) protein is ADP-ribosylation factor-like protein 8c.